We begin with the raw amino-acid sequence, 143 residues long: Translation initiation factor 2 subunit beta (143 aa).

Belongs to the eIF-2-beta/eIF-5 family. As to quaternary structure, heterotrimer composed of an alpha, a beta and a gamma chain.

Its function is as follows. eIF-2 functions in the early steps of protein synthesis by forming a ternary complex with GTP and initiator tRNA. The sequence is that of Translation initiation factor 2 subunit beta (eif2b) from Methanocaldococcus jannaschii (strain ATCC 43067 / DSM 2661 / JAL-1 / JCM 10045 / NBRC 100440) (Methanococcus jannaschii).